The chain runs to 337 residues: Glycerol-3-phosphate dehydrogenase [NAD(P)+] (337 aa).

NADPH is bound by residues Ser17, Tyr18, His38, and Lys112. Sn-glycerol 3-phosphate-binding residues include Lys112, Gly141, and Thr143. Ala145 provides a ligand contact to NADPH. Sn-glycerol 3-phosphate-binding residues include Lys197, Asp250, Ser260, Arg261, and Asn262. The active-site Proton acceptor is the Lys197. Position 261 (Arg261) interacts with NADPH. Positions 285 and 287 each coordinate NADPH.

This sequence belongs to the NAD-dependent glycerol-3-phosphate dehydrogenase family.

It is found in the cytoplasm. The enzyme catalyses sn-glycerol 3-phosphate + NAD(+) = dihydroxyacetone phosphate + NADH + H(+). It catalyses the reaction sn-glycerol 3-phosphate + NADP(+) = dihydroxyacetone phosphate + NADPH + H(+). It participates in membrane lipid metabolism; glycerophospholipid metabolism. Catalyzes the reduction of the glycolytic intermediate dihydroxyacetone phosphate (DHAP) to sn-glycerol 3-phosphate (G3P), the key precursor for phospholipid synthesis. This chain is Glycerol-3-phosphate dehydrogenase [NAD(P)+], found in Pasteurella multocida (strain Pm70).